Reading from the N-terminus, the 61-residue chain is Large ribosomal subunit protein bL32 (61 aa).

Basic residues predominate over residues 1–16; sequence MAVPKRKTSPSKRGMR. Positions 1–39 are disordered; sequence MAVPKRKTSPSKRGMRRSADALKAPTYIEDKNSGELRRP. Over residues 28-39 the composition is skewed to basic and acidic residues; sequence IEDKNSGELRRP.

The protein belongs to the bacterial ribosomal protein bL32 family.

This is Large ribosomal subunit protein bL32 from Rhizobium meliloti (strain 1021) (Ensifer meliloti).